Consider the following 494-residue polypeptide: Aspartyl/glutamyl-tRNA(Asn/Gln) amidotransferase subunit B (494 aa).

It belongs to the GatB/GatE family. GatB subfamily. Heterotrimer of A, B and C subunits.

The catalysed reaction is L-glutamyl-tRNA(Gln) + L-glutamine + ATP + H2O = L-glutaminyl-tRNA(Gln) + L-glutamate + ADP + phosphate + H(+). The enzyme catalyses L-aspartyl-tRNA(Asn) + L-glutamine + ATP + H2O = L-asparaginyl-tRNA(Asn) + L-glutamate + ADP + phosphate + 2 H(+). In terms of biological role, allows the formation of correctly charged Asn-tRNA(Asn) or Gln-tRNA(Gln) through the transamidation of misacylated Asp-tRNA(Asn) or Glu-tRNA(Gln) in organisms which lack either or both of asparaginyl-tRNA or glutaminyl-tRNA synthetases. The reaction takes place in the presence of glutamine and ATP through an activated phospho-Asp-tRNA(Asn) or phospho-Glu-tRNA(Gln). This Rhodopseudomonas palustris (strain ATCC BAA-98 / CGA009) protein is Aspartyl/glutamyl-tRNA(Asn/Gln) amidotransferase subunit B.